Consider the following 158-residue polypeptide: MGVQHKLDIFLVSEGIAIKEANLLKGDSYGCTIKIKLDKEKTFKFVIVLEPEWIDEIKPIYMKVNDESVELELDYKDAIKRIYSAEVVLCSDSVINLFSDVDVSYTCEYPTIKVNTIKKYYSVQNRGMTYVHIESPINTKDKCWFVEKNGWYEDRTHS.

This sequence belongs to the poxviridae C7 protein family.

Functionally, plays a role for multiplication of the virus in different cell types. This Oryctolagus cuniculus (Rabbit) protein is Probable host range protein 2-1.